A 367-amino-acid chain; its full sequence is E3 ubiquitin-protein ligase RGLG3 (367 aa).

One can recognise a VWFA domain in the interval 37-257 (NLILGIDFTK…KEAAFALAAL (221 aa)). Residues 323-356 (CPICLTNPKDMAFSCGHTTCKECGVVITTCPLCR) form an RING-type zinc finger.

As to quaternary structure, interacts with UBC30, GRXS17 and GLB3. Binds to and coactivates GAF1/IDD2 and ENY/IDD1. Widely expressed.

The protein localises to the cytoplasm. It is found in the nucleus. The catalysed reaction is S-ubiquitinyl-[E2 ubiquitin-conjugating enzyme]-L-cysteine + [acceptor protein]-L-lysine = [E2 ubiquitin-conjugating enzyme]-L-cysteine + N(6)-ubiquitinyl-[acceptor protein]-L-lysine.. Functionally, possesses E3 ubiquitin-protein ligase in vitro. Acts as upstream modulator of jasmonate (JA) signaling in response to various stimuli, such as JA-inhibited root growth, JA-inductive gene expression, coronatine-mediated pathogen susceptibility, wound-stimulated expression of JA-responsive genes and wound-induced JA biosynthesis. Controls fumonisin B1 (FB1)-triggered programmed cell death (PCD) by modulating the JA signaling pathway. May mediate salicylic acid (SA) suppression of JA signaling in FB1-induced responses. May mediate the formation of 'Lys-48'-linked multiubiquitin chains. Mediates the polyubiquitination and subsequent proteasomal degradation of the target protein GRXS17. The protein is E3 ubiquitin-protein ligase RGLG3 of Arabidopsis thaliana (Mouse-ear cress).